Here is a 252-residue protein sequence, read N- to C-terminus: Ubiquinone biosynthesis protein COQ4 homolog 2, mitochondrial (252 aa).

Zn(2+) contacts are provided by His130, Asp131, His134, and Glu146.

This sequence belongs to the COQ4 family. In terms of assembly, component of a multi-subunit COQ enzyme complex. Zn(2+) is required as a cofactor.

It is found in the mitochondrion inner membrane. It catalyses the reaction a 4-hydroxy-3-methoxy-5-(all-trans-polyprenyl)benzoate + H(+) = a 2-methoxy-6-(all-trans-polyprenyl)phenol + CO2. It participates in cofactor biosynthesis; ubiquinone biosynthesis. Its function is as follows. Lyase that catalyzes the C1-decarboxylation of 4-hydroxy-3-methoxy-5-(all-trans-polyprenyl)benzoic acid into 2-methoxy-6-(all-trans-polyprenyl)phenol during ubiquinone biosynthesis. In Trypanosoma cruzi (strain CL Brener), this protein is Ubiquinone biosynthesis protein COQ4 homolog 2, mitochondrial.